Consider the following 404-residue polypeptide: Pectate lyase E (404 aa).

Residues 1-41 (MNNSRMSSVSTQKTTGRSALGTKSALAAIIATTMMVSVASA) form the signal peptide. Ca(2+)-binding residues include D182 and D225. Residue R278 is part of the active site.

This sequence belongs to the polysaccharide lyase 1 family. PLBC subfamily. The cofactor is Ca(2+).

It is found in the secreted. The enzyme catalyses Eliminative cleavage of (1-&gt;4)-alpha-D-galacturonan to give oligosaccharides with 4-deoxy-alpha-D-galact-4-enuronosyl groups at their non-reducing ends.. It functions in the pathway glycan metabolism; pectin degradation; 2-dehydro-3-deoxy-D-gluconate from pectin: step 2/5. In terms of biological role, involved in maceration and soft-rotting of plant tissue. Pectate lyases have been implicated as pathogenicity factors which induce maceration or rotting of plant tissue. PelE is sufficient to induce these effects under laboratory conditions. The polypeptide is Pectate lyase E (pelE) (Dickeya dadantii (strain 3937) (Erwinia chrysanthemi (strain 3937))).